Here is a 143-residue protein sequence, read N- to C-terminus: Midkine (143 aa).

Residues 1-20 (MQHRGFLLLTLLALLALTSA) form the signal peptide. 5 disulfides stabilise this stretch: C37-C61, C45-C70, C52-C74, C84-C116, and C94-C126.

Belongs to the pleiotrophin family. Homodimer. Interacts with ALK. Interacts with LRP1; promotes neuronal survival. Interacts with LRP2. Interacts with NCAM1. Interacts (via C-terminal) with PTPRZ1 (via chondroitin sulfate chains); this interaction is inhibited by PTN; this interaction promotes neuronal migration. Interacts with NCL; this interaction promotes NCL clustering and lateral movements of this complex into lipid rafts leading to MDK internalization. Interacts with LRP6 and LRP8: this interaction is calcium dependent. Interacts with ITGA4. Interacts with ITGA6. Interacts with ITGB1. Interacts with ITGA4:ITGB1 complex; this interaction mediates MDK-induced osteoblast cells migration through PXN phosphorylation. Interacts with ITGA6:ITGB1 complex; this interaction mediates MDK-induced neurite outgrowth. Interacts with NOTCH2; this interaction mediates a nuclear accumulation of NOTCH2 and therefore activation of NOTCH2 signaling leading to interaction between HES1 and STAT3. Interacts with GPC2 (via heparan sulfate chain); this interaction is inhibited by heparin followed by chondroitin sulfate E; this interaction induces GPC2 clustering through heparan sulfate chain; this interaction induces neuronal cell adhesion and neurite outgrowth. Interacts with SDC3; this interaction induces SDC3 clustering; this interaction induces neuronal cell adhesion and neurite outgrowth. Interacts with SDC1. Interacts with CSPG5; this interaction promotes elongation of oligodendroglial precursor-like cells. In terms of tissue distribution, expressed in various tumor cell lines. In insulinoma tissue predominantly expressed in precancerous lesions.

It localises to the secreted. Its function is as follows. Secreted protein that functions as a cytokine and growth factor and mediates its signal through cell-surface proteoglycan and non-proteoglycan receptors. Binds cell-surface proteoglycan receptors via their chondroitin sulfate (CS) groups. Thereby regulates many processes like inflammatory response, cell proliferation, cell adhesion, cell growth, cell survival, tissue regeneration, cell differentiation and cell migration. Participates in inflammatory processes by exerting two different activities. Firstly, mediates neutrophils and macrophages recruitment to the sites of inflammation both by direct action by cooperating namely with ITGB2 via LRP1 and by inducing chemokine expression. This inflammation can be accompanied by epithelial cell survival and smooth muscle cell migration after renal and vessel damage, respectively. Secondly, suppresses the development of tolerogenic dendric cells thereby inhibiting the differentiation of regulatory T cells and also promote T cell expansion through NFAT signaling and Th1 cell differentiation. Promotes tissue regeneration after injury or trauma. After heart damage negatively regulates the recruitment of inflammatory cells and mediates cell survival through activation of anti-apoptotic signaling pathways via MAPKs and AKT pathways through the activation of angiogenesis. Also facilitates liver regeneration as well as bone repair by recruiting macrophage at trauma site and by promoting cartilage development by facilitating chondrocyte differentiation. Plays a role in brain by promoting neural precursor cells survival and growth through interaction with heparan sulfate proteoglycans. Binds PTPRZ1 and promotes neuronal migration and embryonic neurons survival. Binds SDC3 or GPC2 and mediates neurite outgrowth and cell adhesion. Binds chondroitin sulfate E and heparin leading to inhibition of neuronal cell adhesion induced by binding with GPC2. Binds CSPG5 and promotes elongation of oligodendroglial precursor-like cells. Also binds ITGA6:ITGB1 complex; this interaction mediates MDK-induced neurite outgrowth. Binds LRP1; promotes neuronal survival. Binds ITGA4:ITGB1 complex; this interaction mediates MDK-induced osteoblast cells migration through PXN phosphorylation. Binds anaplastic lymphoma kinase (ALK) which induces ALK activation and subsequent phosphorylation of the insulin receptor substrate (IRS1), followed by the activation of mitogen-activated protein kinase (MAPK) and PI3-kinase, and the induction of cell proliferation. Promotes epithelial to mesenchymal transition through interaction with NOTCH2. During arteriogenesis, plays a role in vascular endothelial cell proliferation by inducing VEGFA expression and release which in turn induces nitric oxide synthase expression. Moreover activates vasodilation through nitric oxide synthase activation. Negatively regulates bone formation in response to mechanical load by inhibiting Wnt/beta-catenin signaling in osteoblasts. In addition plays a role in hippocampal development, working memory, auditory response, early fetal adrenal gland development and the female reproductive system. This is Midkine from Homo sapiens (Human).